The following is a 378-amino-acid chain: Erythronate-4-phosphate dehydrogenase (378 aa).

Positions 45 and 66 each coordinate substrate. NAD(+) contacts are provided by aspartate 146 and threonine 175. The active site involves arginine 208. Aspartate 232 provides a ligand contact to NAD(+). Glutamate 237 is an active-site residue. The Proton donor role is filled by histidine 254. Glycine 257 contacts NAD(+). Substrate is bound at residue tyrosine 258.

Belongs to the D-isomer specific 2-hydroxyacid dehydrogenase family. PdxB subfamily. Homodimer.

It localises to the cytoplasm. The catalysed reaction is 4-phospho-D-erythronate + NAD(+) = (R)-3-hydroxy-2-oxo-4-phosphooxybutanoate + NADH + H(+). It functions in the pathway cofactor biosynthesis; pyridoxine 5'-phosphate biosynthesis; pyridoxine 5'-phosphate from D-erythrose 4-phosphate: step 2/5. In terms of biological role, catalyzes the oxidation of erythronate-4-phosphate to 3-hydroxy-2-oxo-4-phosphonooxybutanoate. This chain is Erythronate-4-phosphate dehydrogenase, found in Escherichia coli (strain ATCC 8739 / DSM 1576 / NBRC 3972 / NCIMB 8545 / WDCM 00012 / Crooks).